Here is a 168-residue protein sequence, read N- to C-terminus: Phosphopantetheine adenylyltransferase (168 aa).

Position 9 (threonine 9) interacts with substrate. Residues 9–10 (TF) and histidine 17 each bind ATP. Positions 41, 74, and 88 each coordinate substrate. Residues 89–91 (GLR), glutamate 99, and 124–130 (LQPIASR) contribute to the ATP site.

Belongs to the bacterial CoaD family. In terms of assembly, homohexamer. The cofactor is Mg(2+).

It is found in the cytoplasm. It carries out the reaction (R)-4'-phosphopantetheine + ATP + H(+) = 3'-dephospho-CoA + diphosphate. It functions in the pathway cofactor biosynthesis; coenzyme A biosynthesis; CoA from (R)-pantothenate: step 4/5. Its function is as follows. Reversibly transfers an adenylyl group from ATP to 4'-phosphopantetheine, yielding dephospho-CoA (dPCoA) and pyrophosphate. The sequence is that of Phosphopantetheine adenylyltransferase from Sphingopyxis alaskensis (strain DSM 13593 / LMG 18877 / RB2256) (Sphingomonas alaskensis).